We begin with the raw amino-acid sequence, 673 residues long: ATP-binding cassette sub-family G member 8 (673 aa).

A compositionally biased stretch (basic and acidic residues) spans 1–11; the sequence is MAGKAAEERGL. A disordered region spans residues 1 to 25; that stretch reads MAGKAAEERGLPKGATPQDTSGLQD. Over 1-416 the chain is Cytoplasmic; sequence MAGKAAEERG…ISNDFRDLPT (416 aa). The 267-residue stretch at 47–313 folds into the ABC transporter domain; the sequence is LEVRDLNYQV…FTAIGYPCPR (267 aa). The ABC transmembrane type-2 domain occupies 411-665; that stretch reads FRDLPTLLIH…VLYYVSLRFI (255 aa). The chain crosses the membrane as a helical span at residues 417–437; sequence LLIHGAEACLMSMTIGFLYFG. The Extracellular portion of the chain corresponds to 438–447; that stretch reads HGSIQLSFMD. Residues 448–468 form a helical membrane-spanning segment; it reads TAALLFMIGALIPFNVILDVI. The Cytoplasmic segment spans residues 469–497; that stretch reads SKCYSERAMLYYELEDGLYTTGPYFFAKI. A helical membrane pass occupies residues 498-518; that stretch reads LGELPEHCAYIIIYGMPTYWL. Topologically, residues 519 to 527 are extracellular; the sequence is ANLRPGLQP. The chain crosses the membrane as a helical span at residues 528-548; it reads FLLHFLLVWLVVFCCRIMALA. The Cytoplasmic segment spans residues 549 to 555; the sequence is AAALLPT. A helical transmembrane segment spans residues 556–576; it reads FHMASFFSNALYNSFYLAGGF. Residues 577–639 are Extracellular-facing; the sequence is MINLSSLWTV…LSVMELDSYP (63 aa). N-linked (GlcNAc...) asparagine glycosylation occurs at asparagine 619. The chain crosses the membrane as a helical span at residues 640-660; the sequence is LYAIYLIVIGLSGGFMVLYYV. The Cytoplasmic segment spans residues 661–673; the sequence is SLRFIKQKPSQDW.

Belongs to the ABC transporter superfamily. ABCG family. Eye pigment precursor importer (TC 3.A.1.204) subfamily. As to quaternary structure, heterodimer with ABCG8. It depends on Mg(2+) as a cofactor. N-glycosylated. Predominantly expressed in the liver. Low expression levels in the small intestine and colon. Very low levels in other tissues, including brain, heart and spleen.

The protein resides in the cell membrane. It is found in the apical cell membrane. The catalysed reaction is cholesterol(in) + ATP + H2O = cholesterol(out) + ADP + phosphate + H(+). The enzyme catalyses sitosterol(in) + ATP + H2O = sitosterol(out) + ADP + phosphate + H(+). Its activity is regulated as follows. The ATPase activity of the heterodimer is stimulated by cholate. Taurocholate, glycocholate, taurochenodeoxycholate, glycochenodeoxycholate and taurodeoxycholate also stimulate ATPase activity, but to a lower degree. Glycodeoxycholate has no significant effect on ATPase activity. ATPase activity is inhibited by vanadate and by berillium fluoride. In terms of biological role, ABCG5 and ABCG8 form an obligate heterodimer that mediates Mg(2+)- and ATP-dependent sterol transport across the cell membrane. Plays an essential role in the selective transport of the dietary cholesterol in and out of the enterocytes and in the selective sterol excretion by the liver into bile. Required for normal sterol homeostasis. The heterodimer with ABCG5 has ATPase activity. The sequence is that of ATP-binding cassette sub-family G member 8 from Homo sapiens (Human).